We begin with the raw amino-acid sequence, 366 residues long: Leucine dehydrogenase (366 aa).

Residue Lys82 is part of the active site. NAD(+) is bound at residue Gly182–Tyr188.

The protein belongs to the Glu/Leu/Phe/Val dehydrogenases family.

It catalyses the reaction L-leucine + NAD(+) + H2O = 4-methyl-2-oxopentanoate + NH4(+) + NADH + H(+). It participates in amino-acid degradation; L-leucine degradation; 4-methyl-2-oxopentanoate from L-leucine (dehydrogenase route): step 1/1. Catalyzes the reversible deamination of L-leucine to 4-methyl-2-oxopentanoate. The polypeptide is Leucine dehydrogenase (ldh) (Bacillus cereus).